Here is a 153-residue protein sequence, read N- to C-terminus: Ribosomal RNA large subunit methyltransferase H (153 aa).

S-adenosyl-L-methionine-binding positions include Leu63, Gly102, and 121-126 (FGKITL).

It belongs to the RNA methyltransferase RlmH family. In terms of assembly, homodimer.

It localises to the cytoplasm. It carries out the reaction pseudouridine(1915) in 23S rRNA + S-adenosyl-L-methionine = N(3)-methylpseudouridine(1915) in 23S rRNA + S-adenosyl-L-homocysteine + H(+). In terms of biological role, specifically methylates the pseudouridine at position 1915 (m3Psi1915) in 23S rRNA. This Sulfurovum sp. (strain NBC37-1) protein is Ribosomal RNA large subunit methyltransferase H.